The following is a 579-amino-acid chain: Rhoptry surface protein CERLI2 (579 aa).

Residues 52 to 84 enclose the C2 domain; that stretch reads LHNYRTFYLLIKINEIFNINKYKQIYIIVNTDK. 11 repeat units span residues 442 to 451, 452 to 461, 462 to 471, 472 to 481, 482 to 491, 492 to 501, 502 to 511, 522 to 531, 532 to 541, 542 to 551, and 552 to 561. The segment at 442 to 561 is 12 X 10 AA tandem repeat of Q-T-E-I-[K/N]-N-D-[H/N/I][I/N]; the sequence is QTDEIKNDNI…QTDEIKNDIN (120 aa).

The protein localises to the cytoplasmic vesicle. It localises to the secretory vesicle. It is found in the rhoptry membrane. Its subcellular location is the cell membrane. The protein resides in the host cell membrane. Plays an important role in rhoptry physiology and thus is essential for merozoite invasion of host erythrocytes. The polypeptide is Rhoptry surface protein CERLI2 (Plasmodium falciparum (isolate 3D7)).